We begin with the raw amino-acid sequence, 143 residues long: MNAVVWWQSLLLVMLGGAFGSGLRFVIGSCLLQRFGAGFPWGTLAVNLIGSFVAGFLLIWLDKRGSAGWSWRMLLIVGLIGGLTTFSSLMMECLVFVRSDRSLMVGLYLCITLLFGLLFVFLGARLGAFVCDDQRVLEIDRTA.

Helical transmembrane passes span 3–23 (AVVW…GSGL), 41–61 (WGTL…LIWL), 76–96 (IVGL…CLVF), and 103–123 (LMVG…VFLG). Residues Gly-81 and Thr-84 each coordinate Na(+).

Belongs to the fluoride channel Fluc/FEX (TC 1.A.43) family.

It is found in the cell inner membrane. The catalysed reaction is fluoride(in) = fluoride(out). Na(+) is not transported, but it plays an essential structural role and its presence is essential for fluoride channel function. Its function is as follows. Fluoride-specific ion channel. Important for reducing fluoride concentration in the cell, thus reducing its toxicity. In Xylella fastidiosa (strain 9a5c), this protein is Fluoride-specific ion channel FluC.